Reading from the N-terminus, the 232-residue chain is Orotate phosphoribosyltransferase (232 aa).

5-phospho-alpha-D-ribose 1-diphosphate is bound by residues Arg107, Lys108, Lys111, His113, and 133–141; that span reads EDLTTAGGS. Thr137 lines the orotate pocket.

Belongs to the purine/pyrimidine phosphoribosyltransferase family. PyrE subfamily. In terms of assembly, homodimer. Requires Mg(2+) as cofactor.

The enzyme catalyses orotidine 5'-phosphate + diphosphate = orotate + 5-phospho-alpha-D-ribose 1-diphosphate. It functions in the pathway pyrimidine metabolism; UMP biosynthesis via de novo pathway; UMP from orotate: step 1/2. In terms of biological role, catalyzes the transfer of a ribosyl phosphate group from 5-phosphoribose 1-diphosphate to orotate, leading to the formation of orotidine monophosphate (OMP). In Sinorhizobium medicae (strain WSM419) (Ensifer medicae), this protein is Orotate phosphoribosyltransferase.